The following is a 351-amino-acid chain: tRNA N6-adenosine threonylcarbamoyltransferase (351 aa).

Fe cation contacts are provided by His124 and His128. Residues 146–150 (LVSGG), Asp180, Gly193, Asp197, and Asn285 contribute to the substrate site. Asp313 contacts Fe cation.

This sequence belongs to the KAE1 / TsaD family. Fe(2+) is required as a cofactor.

The protein resides in the cytoplasm. It carries out the reaction L-threonylcarbamoyladenylate + adenosine(37) in tRNA = N(6)-L-threonylcarbamoyladenosine(37) in tRNA + AMP + H(+). In terms of biological role, required for the formation of a threonylcarbamoyl group on adenosine at position 37 (t(6)A37) in tRNAs that read codons beginning with adenine. Is involved in the transfer of the threonylcarbamoyl moiety of threonylcarbamoyl-AMP (TC-AMP) to the N6 group of A37, together with TsaE and TsaB. TsaD likely plays a direct catalytic role in this reaction. The polypeptide is tRNA N6-adenosine threonylcarbamoyltransferase (Mycobacterium leprae (strain TN)).